Consider the following 471-residue polypeptide: 5-hydroxytryptamine receptor 2A (471 aa).

Over 1–80 (MDILCEENTS…LQEKNWSALL (80 aa)) the chain is Extracellular. N-linked (GlcNAc...) asparagine glycosylation is present at asparagine 38. The helical transmembrane segment at 81–97 (TAVVIILTIAGNILVIM) threads the bilayer. Topologically, residues 98–111 (AVSLEKKLQNATNY) are cytoplasmic. The helical transmembrane segment at 112–137 (FLMSLAIADMLLGFLVMPVSMLTILY) threads the bilayer. The Extracellular portion of the chain corresponds to 138-146 (GYRWPLPSK). The helical transmembrane segment at 147-171 (LCAVWIYLDVLFSTASIMHLCAISL) threads the bilayer. A disulfide bond links cysteine 148 and cysteine 227. Position 155 (aspartate 155) interacts with serotonin. The DRY motif; important for ligand-induced conformation changes motif lies at 172-174 (DRY). Topologically, residues 172-191 (DRYVAIQNPIHHSRFNSRTK) are cytoplasmic. Residues 192–215 (AFLKIIAVWTISVGISMPIPVFGL) form a helical membrane-spanning segment. The Extracellular portion of the chain corresponds to 216–232 (QDDSKVFKEGSCLLADD). Residues 233-258 (NFVLIGSFVSFFIPLTIMVITYFLTI) form a helical membrane-spanning segment. Topologically, residues 259-322 (KSLQKEATLC…QSISNEQKAC (64 aa)) are cytoplasmic. Serine 280 bears the Phosphoserine mark. A helical transmembrane segment spans residues 323–348 (KVLGIVFSLFVVMWCPFFITNIMAVI). Asparagine 343 contacts serotonin. Residues cysteine 349 and cysteine 353 are joined by a disulfide bond. The Extracellular portion of the chain corresponds to 349–356 (CKESCNED). The helical transmembrane segment at 357–382 (VIGALLNVFVWIGYLSSAVNPLVYTL) threads the bilayer. An NPxxY motif; important for ligand-induced conformation changes and signaling motif is present at residues 376 to 380 (NPLVY). Topologically, residues 383-471 (FNKTYRSAFS…DGVNEKVSCV (89 aa)) are cytoplasmic. Positions 450–471 (KQHSEDASKDNSDGVNEKVSCV) are disordered. Residues 451–465 (QHSEDASKDNSDGVN) are compositionally biased toward basic and acidic residues. A PDZ-binding motif is present at residues 469 to 471 (SCV).

Belongs to the G-protein coupled receptor 1 family. In terms of assembly, interacts (via C-terminus) with MPDZ and PATJ. May interact (via C-terminus) with MPP3, PRDX6, DLG4, DLG1, CASK, APBA1 and MAGI2. Interacts with GRM2 and DRD2; this may affect signaling.

It is found in the cell membrane. It localises to the cell projection. Its subcellular location is the dendrite. The protein localises to the axon. The protein resides in the cytoplasmic vesicle. It is found in the membrane. It localises to the caveola. Its subcellular location is the presynapse. Its activity is regulated as follows. G-protein coupled receptor activity is regulated by lipids: oleamide increases HTR2A-mediated activity. Its function is as follows. G-protein coupled receptor for 5-hydroxytryptamine (serotonin). Also functions as a receptor for various drugs and psychoactive substances, including mescaline, psilocybin, 1-(2,5-dimethoxy-4-iodophenyl)-2-aminopropane (DOI) and lysergic acid diethylamide (LSD). Ligand binding causes a conformation change that triggers signaling via guanine nucleotide-binding proteins (G proteins) and modulates the activity of downstream effectors. HTR2A is coupled to G(q)/G(11) G alpha proteins and activates phospholipase C-beta, releasing diacylglycerol (DAG) and inositol 1,4,5-trisphosphate (IP3) second messengers that modulate the activity of phosphatidylinositol 3-kinase and promote the release of Ca(2+) ions from intracellular stores, respectively. Beta-arrestin family members inhibit signaling via G proteins and mediate activation of alternative signaling pathways. Affects neural activity, perception, cognition and mood. Plays a role in the regulation of behavior, including responses to anxiogenic situations and psychoactive substances. Plays a role in intestinal smooth muscle contraction, and may play a role in arterial vasoconstriction. The polypeptide is 5-hydroxytryptamine receptor 2A (HTR2A) (Pongo pygmaeus (Bornean orangutan)).